Consider the following 434-residue polypeptide: GPI-anchor transamidase component PIGU (434 aa).

At 1 to 3 the chain is on the cytoplasmic side; the sequence is MAA. The chain crosses the membrane as a helical span at residues 4 to 22; that stretch reads PLALVLVVAVTVRAALFRS. Over 23 to 78 the chain is Lumenal; it reads SLAEFISERVEVVSPLSSWKRVVEGLALLDLGVSPYSGAVFHETPLIIYLFHFLID. A helical membrane pass occupies residues 79 to 99; the sequence is YAELVFMITDALTAIALYFAI. Residues 100 to 136 are Cytoplasmic-facing; sequence QDFNKVVFKKQKLLLELDQYAPDVAELIRTPMEMRYI. 4 helical membrane passes run 137–157, 158–177, 178–193, and 194–204; these read PLKVALYLLNPYTILSCVAKS, TCAINNTLIAFFILTTIKGS, VFLSAVFLALATYQSL, and YPVTLFAPGLL. At 205-221 the chain is on the cytoplasmic side; that stretch reads YLLQRQYIPVKVKSKAF. Residue K215 coordinates a cardiolipin. A helical membrane pass occupies residues 222–243; that stretch reads WIFSWEYAMMYTGSLVVIVCLS. Residues 244–285 are Lumenal-facing; the sequence is FFLLSSWDFIPAVYGFILSVPDLTPNIGLFWYFFAEMFEHFS. Residues 286-305 form a helical membrane-spanning segment; that stretch reads LFFVCVFQINVFFYTVPLAI. Topologically, residues 306 to 310 are cytoplasmic; it reads KLKEH. K308 lines the a cardiolipin pocket. 2 helical membrane-spanning segments follow: residues 311–330 and 331–344; these read PIFFMFIQIAIISIFKSYPT and VGDVALYMAFFPVW. The Cytoplasmic portion of the chain corresponds to 345 to 353; that stretch reads NHLYRFLRN. A helical transmembrane segment spans residues 354–371; it reads IFVLTCIIIVCSLLFPVL. Topologically, residues 372-383 are lumenal; the sequence is WHLWIYAGSANS. A 2-acyl-6-[6-phosphoethanolamine-alpha-D-mannosyl-(1-&gt;2)-6-phosphoethanolamine-alpha-D-mannosyl-(1-&gt;6)-2-phosphoethanolamine-alpha-D-mannosyl-(1-&gt;4)-alpha-D-glucosaminyl]-1-(1-radyl,2-acyl-sn-glycero-3-phospho)-1D-myo-inositol-binding residues include N382 and N384. A helical membrane pass occupies residues 384 to 405; that stretch reads NFFYAITLTFNVGQILLISDYF. The Cytoplasmic segment spans residues 406–434; the sequence is YAFLRREYYLTHGLYLTAKDGTEAMLVLK.

The protein belongs to the PIGU family. In terms of assembly, heteropentamer. Part of the GPI-anchor transamidase complex, consisting of PIGK, PIGT, PIGS, PIGU and GAA1.

It localises to the endoplasmic reticulum membrane. The protein operates within glycolipid biosynthesis; glycosylphosphatidylinositol-anchor biosynthesis. Functionally, component of the glycosylphosphatidylinositol-anchor (GPI-anchor) transamidase (GPI-T) complex that catalyzes the formation of the linkage between a proprotein and a GPI-anchor and participates in GPI anchored protein biosynthesis. Binds the lipid portion of GPI-anchor. May act as an organizer in the transmembrane layer to recruit other subunits, and thus is essential for assembly of the complex. The sequence is that of GPI-anchor transamidase component PIGU from Mus musculus (Mouse).